The following is a 730-amino-acid chain: Translation factor GUF1 homolog, mitochondrial (730 aa).

Residues 106-289 (ELIRNFCIIA…AVVVSIPPPK (184 aa)) enclose the tr-type G domain. GTP contacts are provided by residues 115–122 (AHVDHGKS), 182–186 (DTPGH), and 236–239 (NKID).

It belongs to the TRAFAC class translation factor GTPase superfamily. Classic translation factor GTPase family. LepA subfamily.

It localises to the mitochondrion inner membrane. It carries out the reaction GTP + H2O = GDP + phosphate + H(+). Promotes mitochondrial protein synthesis. May act as a fidelity factor of the translation reaction, by catalyzing a one-codon backward translocation of tRNAs on improperly translocated ribosomes. Binds to mitochondrial ribosomes in a GTP-dependent manner. The polypeptide is Translation factor GUF1 homolog, mitochondrial (Theileria annulata).